Here is a 40-residue protein sequence, read N- to C-terminus: Photosystem II reaction center protein J (40 aa).

The helical transmembrane segment at 8 to 28 threads the bilayer; it reads IPLWIVGTVTGILVIGLIGVF.

It belongs to the PsbJ family. In terms of assembly, PSII is composed of 1 copy each of membrane proteins PsbA, PsbB, PsbC, PsbD, PsbE, PsbF, PsbH, PsbI, PsbJ, PsbK, PsbL, PsbM, PsbT, PsbX, PsbY, PsbZ, Psb30/Ycf12, at least 3 peripheral proteins of the oxygen-evolving complex and a large number of cofactors. It forms dimeric complexes.

Its subcellular location is the plastid. It is found in the chloroplast thylakoid membrane. Functionally, one of the components of the core complex of photosystem II (PSII). PSII is a light-driven water:plastoquinone oxidoreductase that uses light energy to abstract electrons from H(2)O, generating O(2) and a proton gradient subsequently used for ATP formation. It consists of a core antenna complex that captures photons, and an electron transfer chain that converts photonic excitation into a charge separation. In Coffea arabica (Arabian coffee), this protein is Photosystem II reaction center protein J.